Here is a 241-residue protein sequence, read N- to C-terminus: Octanoyltransferase (241 aa).

One can recognise a BPL/LPL catalytic domain in the interval 43 to 228 (ADTPDEIWLV…RLTANLDGSP (186 aa)). Substrate-binding positions include 83–90 (RGGQITYH), 159–161 (ALG), and 172–174 (GVS). Residue Cys190 is the Acyl-thioester intermediate of the active site.

This sequence belongs to the LipB family.

Its subcellular location is the cytoplasm. The catalysed reaction is octanoyl-[ACP] + L-lysyl-[protein] = N(6)-octanoyl-L-lysyl-[protein] + holo-[ACP] + H(+). The protein operates within protein modification; protein lipoylation via endogenous pathway; protein N(6)-(lipoyl)lysine from octanoyl-[acyl-carrier-protein]: step 1/2. Functionally, catalyzes the transfer of endogenously produced octanoic acid from octanoyl-acyl-carrier-protein onto the lipoyl domains of lipoate-dependent enzymes. Lipoyl-ACP can also act as a substrate although octanoyl-ACP is likely to be the physiological substrate. This Paraburkholderia phytofirmans (strain DSM 17436 / LMG 22146 / PsJN) (Burkholderia phytofirmans) protein is Octanoyltransferase.